Consider the following 546-residue polypeptide: Chaperonin GroEL 1 (546 aa).

ATP is bound by residues 30 to 33 (TLGP), K51, 87 to 91 (DGTTT), G415, 479 to 481 (NAA), and D495. Positions 526 to 546 (KEDAPMPGGMPGGMGGMGMDM) are disordered. A compositionally biased stretch (gly residues) spans 534–546 (GMPGGMGGMGMDM).

This sequence belongs to the chaperonin (HSP60) family. Forms a cylinder of 14 subunits composed of two heptameric rings stacked back-to-back. Interacts with the co-chaperonin GroES.

The protein localises to the cytoplasm. It carries out the reaction ATP + H2O + a folded polypeptide = ADP + phosphate + an unfolded polypeptide.. In terms of biological role, together with its co-chaperonin GroES, plays an essential role in assisting protein folding. The GroEL-GroES system forms a nano-cage that allows encapsulation of the non-native substrate proteins and provides a physical environment optimized to promote and accelerate protein folding. In Burkholderia pseudomallei (strain 1106a), this protein is Chaperonin GroEL 1.